A 400-amino-acid chain; its full sequence is MAKQKYERTKPHVNVGTIGHVDHGKTTLTAAITFCLAKAGGAVPTAYDQIDKAPEERERGITIATAHVEYETEKRHYAHVDCPGHADYVKNMITGAAQMDGAILVVSAADGPMPQTREHILLARQVGVPYIVVFLNKVDQVDDPELLELVEMEVRELLTEYEFPGDEIPIVTGSALKAMECGCGKRECEWCGKVWELMDAVDSYIPTPERDTDKPFLMPIEDVFTITGRGTVTTGRVERGKVKVGDEVEIIGLRDEIRKTVVTGVEMFRKILDEAVAGDNIGTLLRGVDRKEVERGMVLAKPGSIKPHTKFNAEVYVLTKEEGGRHTPFFNGYRPQFYFRTTDVTGVVNLPEGVEMVMPGDNIRMTIELITPIAIEEGLRFAIREGGRTVGAGVVTGIIE.

A tr-type G domain is found at 10–209 (KPHVNVGTIG…AVDSYIPTPE (200 aa)). Positions 19 to 26 (GHVDHGKT) are G1. 19 to 26 (GHVDHGKT) contributes to the GTP binding site. Residue T26 coordinates Mg(2+). Residues 60-64 (GITIA) are G2. Residues 81–84 (DCPG) form a G3 region. Residues 81-85 (DCPGH) and 136-139 (NKVD) contribute to the GTP site. Residues 136 to 139 (NKVD) are G4. The interval 174 to 176 (SAL) is G5.

This sequence belongs to the TRAFAC class translation factor GTPase superfamily. Classic translation factor GTPase family. EF-Tu/EF-1A subfamily. Monomer.

The protein localises to the cytoplasm. The enzyme catalyses GTP + H2O = GDP + phosphate + H(+). Its function is as follows. GTP hydrolase that promotes the GTP-dependent binding of aminoacyl-tRNA to the A-site of ribosomes during protein biosynthesis. This is Elongation factor Tu from Moorella thermoacetica (strain ATCC 39073 / JCM 9320).